The primary structure comprises 1019 residues: MGLHDSFLALLLLLGGAWAQQAEINARVLRAQDCPVDLFFVLDTSESVALRVKPFGDLVAQVKDFTNRFIDKLTERYFRCDRFLAWNAGALHYSDSVVIIKDLTAMPSGRAELKNSVSAINYIGKGTHTDCAIKQGIERLLLGGSHLKENKYLIVVTDGHPLEGYKEPCGGLDDAANEAKHLGIKVFSVAISPHHLDQRLNIIATDHAYRRNFTATSLKPTRDLDVEETINNIIEMIKDNMEQSCCSFECHPPRGPPGPPGDPGHEGERGKPGLPGQKGDAGDPGRPGDMGPVGYQGMKGDKGSRGEKGSRGAKGAKGEKGKRGIDGIDGMKGEAGYPGLPGCKGSPGFDGTQGPPGPKGDPGAYGPKGGKGEPGEDGKPGRQGIPGSPGEKGAPGNRGEPGPLGETGDEGSPGADGPPGERGSNGERGPPGSPGDRGPRGDLGEPGPPGDQGREGPLGPPGDQGEPGPPGPKGYRGDDGPRGNEGPKGSPGAPGLPGDPGLMGERGEDGPPGNGTIGFPGAPGQQGDRGDPGINGTKGYVGPKGDEGEAGDPGNDNPTAGPSGIKGAKGHRGPEGRPGPPGPVGPPGPDECEILDIIMKMCSCCECTCGPVDLLFVLDSSESIGLQNFQIAKDFIIKVIDRLSKDERVKFEPGESRVGVVQYSHNNTQELVAMGDANIDNIGALKQAVKNLKWIAGGTHTGEALQFSKENLLRRFTSNNNVAIVITDGRSDTLRDRTPLTSLCEVTPVVSLGIGDIFRNNPNPDQLNDIACLGMPRRQGLSIQRDNYAELLDDSFLQNITSYVCREKKCPDYTCPITFANPADIMLLVDSSTSVGSKNFDTTKNFVKRLAERFLEASKPAEDSVRVSVVQYSGRNQQKVEVPFQRNYTVIAKAVDNMEFMNEATDVNAALQYIMGLYQRSSRSGAKKKVLVFSDGNSQGITARAIERTVQEVQQAGIEVYVLAVGSQVNEPNVRVLVTGKSTNYDVAYGERHLFRVPDYTSLLRGVFYQTVSRKIAVD.

Positions 1–19 (MGLHDSFLALLLLLGGAWA) are cleaved as a signal peptide. Residues 37-233 (DLFFVLDTSE…LDVEETINNI (197 aa)) enclose the VWFA 1 domain. An N-linked (GlcNAc...) asparagine glycan is attached at Asn-212. Residues 248-588 (FECHPPRGPP…GPPGPVGPPG (341 aa)) are disordered. The span at 253–262 (PRGPPGPPGD) shows a compositional bias: pro residues. Basic and acidic residues-rich tracts occupy residues 299–332 (KGDK…DGMK) and 370–380 (GKGEPGEDGKP). The span at 427 to 436 (ERGPPGSPGD) shows a compositional bias: low complexity. A Cell attachment site motif is present at residues 476 to 478 (RGD). Asn-514 carries an N-linked (GlcNAc...) asparagine glycan. The short motif at 529-531 (RGD) is the Cell attachment site element. An N-linked (GlcNAc...) asparagine glycan is attached at Asn-535. Over residues 577 to 588 (RPGPPGPVGPPG) the composition is skewed to pro residues. 2 VWFA domains span residues 613 to 800 (DLLF…LQNI) and 824 to 1012 (DIML…YQTV). Residues Asn-799 and Asn-887 are each glycosylated (N-linked (GlcNAc...) asparagine).

The protein belongs to the type VI collagen family. In terms of assembly, trimers composed of three different chains: alpha 1(VI), alpha 2(VI), and alpha 3(VI). Post-translationally, prolines at the third position of the tripeptide repeating unit (G-X-Y) are hydroxylated in some or all of the chains.

Its subcellular location is the secreted. The protein resides in the extracellular space. It localises to the extracellular matrix. Its function is as follows. Collagen VI acts as a cell-binding protein. The polypeptide is Collagen alpha-1(VI) chain (COL6A1) (Gallus gallus (Chicken)).